Here is a 309-residue protein sequence, read N- to C-terminus: Aurora kinase C (309 aa).

Residues Met1 to Pro33 are disordered. Polar residues predominate over residues Thr22 to Ser32. A Protein kinase domain is found at Phe43–Val293. ATP contacts are provided by residues Leu49 to Val57 and Lys72. Asp166 serves as the catalytic Proton acceptor. Phosphothreonine; by PKA is present on Thr198. The segment at Trp292–Ser309 is interaction with BIRC5.

This sequence belongs to the protein kinase superfamily. Ser/Thr protein kinase family. Aurora subfamily. Component of the chromosomal passenger complex (CPC) composed of at least BIRC5/survivin, CDCA8/borealin, INCENP, AURKB or AURKC; predominantly independent AURKB- and AURKC-containing complexes exist; in the complex interacts directly with BIRC5/survivin and INCENP. Interacts with TACC1. As to expression, isoform 1 and isoform 2 are expressed in testis. Elevated expression levels were seen only in a subset of cancer cell lines such as Hep-G2, Huh-7 and HeLa. Expression is maximum at M phase.

The protein localises to the nucleus. The protein resides in the chromosome. Its subcellular location is the centromere. It is found in the cytoplasm. It localises to the cytoskeleton. The protein localises to the spindle. The catalysed reaction is L-seryl-[protein] + ATP = O-phospho-L-seryl-[protein] + ADP + H(+). The enzyme catalyses L-threonyl-[protein] + ATP = O-phospho-L-threonyl-[protein] + ADP + H(+). Okadaic acid, an inhibitor of protein phosphatase 1 (PP1), protein phosphatase 2A (PP2A) and protein phosphatase 5 (PP5), increases AURKC activity. AURKC is also stabilized through its interaction with INCENP, which also acts as an activator. Functionally, serine/threonine-protein kinase component of the chromosomal passenger complex (CPC), a complex that acts as a key regulator of mitosis. The CPC complex has essential functions at the centromere in ensuring correct chromosome alignment and segregation and is required for chromatin-induced microtubule stabilization and spindle assembly. Also plays a role in meiosis and more particularly in spermatogenesis. Has redundant cellular functions with AURKB and can rescue an AURKB knockdown. Like AURKB, AURKC phosphorylates histone H3 at 'Ser-10' and 'Ser-28'. AURKC phosphorylates the CPC complex subunits BIRC5/survivin and INCENP leading to increased AURKC activity. Phosphorylates TACC1, another protein involved in cell division, at 'Ser-228'. The protein is Aurora kinase C (AURKC) of Homo sapiens (Human).